The sequence spans 282 residues: MAMIIDGKRISGEIKDELKAEVSELKSQGKEVTLAVIQVGTDPASTVYVGNKKKACEYCGIRSLAYELPLETTEEELLNLINELNDRDDVTGILVQLPLPDHIEENKVIKTIDPKKDVDGFHPESVGALSIGQAGYLSCTPAGIVQLLKRSGIEIEGKECVVLGRSNIVGKPMALLLLRENGTVTICHSKTKNLSEITKRADILVVAIGKPRFLTKEYVKDGAVVIDVGMHRDENNKLCGDVDYDDVVDKVSAITPVPGGVGPMTIAMLMNNCVYGAKKFQI.

NADP(+)-binding positions include 164 to 166 (GRS) and Ser-189.

It belongs to the tetrahydrofolate dehydrogenase/cyclohydrolase family. In terms of assembly, homodimer.

It carries out the reaction (6R)-5,10-methylene-5,6,7,8-tetrahydrofolate + NADP(+) = (6R)-5,10-methenyltetrahydrofolate + NADPH. The catalysed reaction is (6R)-5,10-methenyltetrahydrofolate + H2O = (6R)-10-formyltetrahydrofolate + H(+). It participates in one-carbon metabolism; tetrahydrofolate interconversion. Its function is as follows. Catalyzes the oxidation of 5,10-methylenetetrahydrofolate to 5,10-methenyltetrahydrofolate and then the hydrolysis of 5,10-methenyltetrahydrofolate to 10-formyltetrahydrofolate. This chain is Bifunctional protein FolD, found in Lachnoclostridium phytofermentans (strain ATCC 700394 / DSM 18823 / ISDg) (Clostridium phytofermentans).